We begin with the raw amino-acid sequence, 270 residues long: MIPKLPLSAFIICLNEEAYLGKCIESLERCAEIVIVDSGSTDGTAALVQSYIDAGWPIRFMYEPWRGYAGQKQFALEQCSQPWCFNIDADERLDKALRELLPELLAASDEIVGWRVARRPYLIGYGYTPENVRERRNLRLIRRGKGRYDLSQKVHEGIVPEGNVGNARTGSLLHFRPLVMDEQILKENKYSTLKADQQVESGKRPRFYKLIFTPPIYFLRLYFRNGLWRCGLSGFIEAMTGAVYAFLTAAKIYQRHALKARPNVDDALSH.

It belongs to the glycosyltransferase 2 family. WaaE/KdtX subfamily.

Its pathway is bacterial outer membrane biogenesis; LPS core biosynthesis. This is Lipopolysaccharide core biosynthesis glycosyltransferase LpsC (lpsC) from Rhizobium meliloti (strain 1021) (Ensifer meliloti).